We begin with the raw amino-acid sequence, 364 residues long: Sorbitol dehydrogenase (364 aa).

Cysteine 54 is a binding site for Zn(2+). Position 60 (tyrosine 60) interacts with substrate. Zn(2+) contacts are provided by histidine 79 and glutamate 80. Residue glutamate 165 coordinates substrate. Residues isoleucine 193, aspartate 213, arginine 218, valine 284 to methionine 286, and valine 308 to arginine 310 contribute to the NAD(+) site. Substrate-binding residues include arginine 310 and tyrosine 311.

Belongs to the zinc-containing alcohol dehydrogenase family. Homotetramer. Zn(2+) serves as cofactor. In terms of tissue distribution, mostly expressed in dry seeds and leaves, and, to a lower extent, in roots, stems, flowers and siliques (at protein level).

The protein resides in the mitochondrion membrane. The protein localises to the cell membrane. Its subcellular location is the cytoplasm. It localises to the cytosol. It catalyses the reaction keto-D-fructose + NADH + H(+) = D-sorbitol + NAD(+). The enzyme catalyses ribitol + NAD(+) = D-ribulose + NADH + H(+). It carries out the reaction xylitol + NAD(+) = D-xylulose + NADH + H(+). Its function is as follows. Polyol dehydrogenase that catalyzes the NAD(+)-dependent oxidation of various sugar alcohols. Is mostly active with D-sorbitol (D-glucitol), ribitol and xylitol as substrates, leading to the C2-oxidized products D-fructose, D-ribulose and D-xylulose, respectively. To a lesser extent, can also oxidize arabitol, mannitol, lactitol and maltitol in vitro. Is required for sorbitol metabolism. Cannot use NADP(+) as the electron acceptor. The protein is Sorbitol dehydrogenase (SDH) of Arabidopsis thaliana (Mouse-ear cress).